Here is a 439-residue protein sequence, read N- to C-terminus: Probable N-acetylmuramidase (439 aa).

Residues 1-57 form the signal peptide; it reads MPVSRIKVKNRHLKKKAKKPLAFYKPATKFAGAVLIAGTLTTTHELLLQQTSPMVQA. 2 disordered regions span residues 218-241 and 287-320; these read SAGTSNSGGSTATNTNNNSNTSST and SSSSSNTNSSTSSGNSAGTTTPTTSVTPAKPASQ. The LysM 1 domain maps to 241 to 284; it reads TTYTVKSGDTLWGISQKYGISVAQIQSANNLKSTVIYIGQKLVL. Positions 287–319 are enriched in low complexity; the sequence is SSSSSNTNSSTSSGNSAGTTTPTTSVTPAKPAS. In terms of domain architecture, LysM 2 spans 321–364; it reads TTIKVKSGDTLWGLSVKYKTTIAQLKSWNHLNSDTIFIGQNLIV. The interval 372–393 is disordered; that stretch reads SSSTGSSSASTSSTSNSSAASN. In terms of domain architecture, LysM 3 spans 395–438; that stretch reads SIHKVVKGDTLWGLSQKSGSPIASIKAWNHLSSDTILIGQYLRI.

It belongs to the glycosyl hydrolase 73 family.

Its subcellular location is the secreted. The enzyme catalyses Hydrolysis of (1-&gt;4)-beta-linkages between N-acetylmuramic acid and N-acetyl-D-glucosamine residues in a peptidoglycan and between N-acetyl-D-glucosamine residues in chitodextrins.. In terms of biological role, required for cell separation during growth. This Lactococcus lactis subsp. lactis (strain IL1403) (Streptococcus lactis) protein is Probable N-acetylmuramidase (acmA).